We begin with the raw amino-acid sequence, 660 residues long: tRNA 5-methylaminomethyl-2-thiouridine biosynthesis bifunctional protein MnmC (660 aa).

Residues Met1–Ala242 are tRNA (mnm(5)s(2)U34)-methyltransferase. The interval Ile266–Ala660 is FAD-dependent cmnm(5)s(2)U34 oxidoreductase.

In the N-terminal section; belongs to the methyltransferase superfamily. tRNA (mnm(5)s(2)U34)-methyltransferase family. This sequence in the C-terminal section; belongs to the DAO family. Requires FAD as cofactor.

It localises to the cytoplasm. The enzyme catalyses 5-aminomethyl-2-thiouridine(34) in tRNA + S-adenosyl-L-methionine = 5-methylaminomethyl-2-thiouridine(34) in tRNA + S-adenosyl-L-homocysteine + H(+). Catalyzes the last two steps in the biosynthesis of 5-methylaminomethyl-2-thiouridine (mnm(5)s(2)U) at the wobble position (U34) in tRNA. Catalyzes the FAD-dependent demodification of cmnm(5)s(2)U34 to nm(5)s(2)U34, followed by the transfer of a methyl group from S-adenosyl-L-methionine to nm(5)s(2)U34, to form mnm(5)s(2)U34. This Burkholderia pseudomallei (strain K96243) protein is tRNA 5-methylaminomethyl-2-thiouridine biosynthesis bifunctional protein MnmC.